The primary structure comprises 359 residues: NAC transcription factor 47 (359 aa).

Residues Leu-10 to Lys-186 enclose the NAC domain. Residues Ile-112–Ser-192 mediate DNA binding. Disordered regions lie at residues Lys-147 to Arg-166 and Thr-200 to Asp-226. Polar residues predominate over residues Arg-148–Asp-165.

The protein resides in the nucleus. Its function is as follows. Transcription factor that binds to the promoter of ACO5, an ACC oxidase involved in ethylene biosynthesis. Mediates waterlogging-induced hyponastic leaf movement, and cell expansion in abaxial cells of the basal petiole region, by directly regulating the expression of ACO5. Required for normal seed development and morphology. The sequence is that of NAC transcription factor 47 from Arabidopsis thaliana (Mouse-ear cress).